The primary structure comprises 917 residues: Interleukin-6 receptor subunit beta (917 aa).

A signal peptide spans 1-22 (MSAPRIWLAQALLFFLTTESIG). Residues 23-617 (QLLEPCGYIY…TPKFAQGEIE (595 aa)) lie on the Extracellular side of the membrane. The region spanning 26-120 (EPCGYIYPEF…IEQNVYGVTM (95 aa)) is the Ig-like C2-type domain. Intrachain disulfides connect Cys-28–Cys-54 and Cys-48–Cys-103. 4 N-linked (GlcNAc...) asparagine glycosylation sites follow: Asn-43, Asn-61, Asn-83, and Asn-131. 5 consecutive Fibronectin type-III domains span residues 128–221 (KPTN…VKPT), 222–322 (PPYN…TYED), 327–417 (PPSF…IPSP), 422–515 (AYSV…LKQA), and 517–611 (PARG…TPKF). The cysteines at positions 134 and 144 are disulfide-linked. The N-linked (GlcNAc...) asparagine glycan is linked to Asn-157. An intrachain disulfide couples Cys-172 to Cys-180. A glycan (N-linked (GlcNAc...) asparagine) is linked at Asn-225. The short motif at 308–312 (WSDWS) is the WSXWS motif element. An N-linked (GlcNAc...) asparagine glycan is attached at Asn-388. An intrachain disulfide couples Cys-456 to Cys-464. Residues Asn-476 and Asn-551 are each glycosylated (N-linked (GlcNAc...) asparagine). The helical transmembrane segment at 618–639 (AIVVPVCLAFLLTTLLGVLFCF) threads the bilayer. Residues 640-917 (NKRDLIKKHI…TVRQGGYMPQ (278 aa)) are Cytoplasmic-facing. The Box 1 motif motif lies at 649–657 (IWPNVPDPS). Disordered regions lie at residues 658-678 (KSHIAQWSPHTPPRHNFNSKD) and 719-754 (TEGHSSGIGGSSCMSSSRPSISSNEENESAQSTAST). Phosphoserine is present on residues Ser-659 and Ser-665. The span at 729 to 753 (SSCMSSSRPSISSNEENESAQSTAS) shows a compositional bias: low complexity. Ser-780, Ser-787, Ser-827, and Ser-837 each carry phosphoserine. The disordered stretch occupies residues 898-917 (EEIPKSYLPQTVRQGGYMPQ).

This sequence belongs to the type I cytokine receptor family. Type 2 subfamily. As to quaternary structure, component of a hexamer of two molecules each of IL6, IL6R and IL6ST; associates with the complex IL6:IL6R but does not interact with IL6. Forms heterodimers composed of LIFR and IL6ST (type I OSM receptor) which are activated by LIF and OSM. Also forms heterodimers composed of OSMR and IL6ST (type II receptor) which are activated by OSM but not by LIF. Interacts with HCK. Interacts with INPP5D/SHIP1. Interacts with SRC and YES. Interacts with ARMH4; this interaction prevents IL6ST protein homodimerization and bridges ARMH4 with IL6R and STAT3 and therefore inhibits phosphorylation of STAT3 at 'Tyr-705'. Post-translationally, phosphorylation of Ser-780 down-regulates cell surface expression. Heavily N-glycosylated. Glycosylation is required for protein stability and localization in plasma membrane but not for ligand binding. As to expression, expression not restricted to IL6-responsive cells. Found in tissues such as brain, heart, thymus, spleen, kidney, lung and liver. Found in all the cell lines tested except BaF-B03. Expressed paraventricular nucleus of the hypothalamus.

It localises to the cell membrane. Signal-transducing molecule. The receptor systems for IL6, LIF, OSM, CNTF, IL11, CTF1 and BSF3 can utilize IL6ST for initiating signal transmission. Binding of IL6 to IL6R induces IL6ST homodimerization and formation of a high-affinity receptor complex, which activates the intracellular JAK-MAPK and JAK-STAT3 signaling pathways. That causes phosphorylation of IL6ST tyrosine residues which in turn activates STAT3. In parallel, the IL6 signaling pathway induces the expression of two cytokine receptor signaling inhibitors, SOCS1 and SOCS3, which inhibit JAK and terminate the activity of the IL6 signaling pathway as a negative feedback loop. Also activates the yes-associated protein 1 (YAP) and NOTCH pathways to control inflammation-induced epithelial regeneration, independently of STAT3. Mediates signals which regulate immune response, hematopoiesis, pain control and bone metabolism. Has a role in embryonic development. Essential for survival of motor and sensory neurons and for differentiation of astrocytes. Required for expression of TRPA1 in nociceptive neurons. Required for the maintenance of PTH1R expression in the osteoblast lineage and for the stimulation of PTH-induced osteoblast differentiation. Required for normal trabecular bone mass and cortical bone composition. This is Interleukin-6 receptor subunit beta from Mus musculus (Mouse).